A 313-amino-acid polypeptide reads, in one-letter code: 3'-5' exoribonuclease YhaM (313 aa).

The HD domain maps to 163–279; it reads HVVSMLRLAK…LHQIDLMDAS (117 aa).

Belongs to the YhaM family.

Shows a 3'-5' exoribonuclease activity. This Listeria monocytogenes serotype 4b (strain CLIP80459) protein is 3'-5' exoribonuclease YhaM.